The sequence spans 587 residues: Formate--tetrahydrofolate ligase (587 aa).

Position 73 to 80 (73 to 80 (TPLGEGKS)) interacts with ATP.

Belongs to the formate--tetrahydrofolate ligase family.

It catalyses the reaction (6S)-5,6,7,8-tetrahydrofolate + formate + ATP = (6R)-10-formyltetrahydrofolate + ADP + phosphate. It functions in the pathway one-carbon metabolism; tetrahydrofolate interconversion. The protein is Formate--tetrahydrofolate ligase of Syntrophobacter fumaroxidans (strain DSM 10017 / MPOB).